The primary structure comprises 99 residues: UPF0751 protein BAMEG_A0107 (99 aa).

The protein belongs to the UPF0751 family.

This chain is UPF0751 protein BAMEG_A0107, found in Bacillus anthracis (strain CDC 684 / NRRL 3495).